The following is a 71-amino-acid chain: Long neurotoxin 5 (71 aa).

5 cysteine pairs are disulfide-bonded: cysteine 3–cysteine 20, cysteine 14–cysteine 41, cysteine 26–cysteine 30, cysteine 45–cysteine 56, and cysteine 57–cysteine 62.

This sequence belongs to the three-finger toxin family. Long-chain subfamily. Type II alpha-neurotoxin sub-subfamily. As to expression, expressed by the venom gland.

It is found in the secreted. Binds with high affinity to muscular (alpha-1/CHRNA1) and neuronal (alpha-7/CHRNA7) nicotinic acetylcholine receptor (nAChR) and inhibits acetylcholine from binding to the receptor, thereby impairing neuromuscular and neuronal transmission. This Naja naja (Indian cobra) protein is Long neurotoxin 5.